The following is a 384-amino-acid chain: NAD-capped RNA hydrolase NPY1 (384 aa).

Zn(2+)-binding residues include Cys179, Cys182, Cys197, and Cys206. The Nudix hydrolase domain maps to 219-351 (PRTDPTVIIA…AGGYRVPFKN (133 aa)). Residues Ala256, Glu272, Glu276, and Glu322 each contribute to the Mg(2+) site. Residues 256 to 258 (AGF), Glu272, Glu276, and Glu322 contribute to the substrate site. The short motif at 257–278 (GFMEPSETIEEACIREIWEETG) is the Nudix box element. A Microbody targeting signal motif is present at residues 378–380 (KTS).

It belongs to the Nudix hydrolase family. NudC subfamily. As to quaternary structure, homodimer. The cofactor is Mg(2+). Requires Zn(2+) as cofactor.

It localises to the peroxisome. The catalysed reaction is a 5'-end NAD(+)-phospho-ribonucleoside in mRNA + H2O = a 5'-end phospho-adenosine-phospho-ribonucleoside in mRNA + beta-nicotinamide D-ribonucleotide + 2 H(+). It carries out the reaction NAD(+) + H2O = beta-nicotinamide D-ribonucleotide + AMP + 2 H(+). The enzyme catalyses NADH + H2O = reduced beta-nicotinamide D-ribonucleotide + AMP + 2 H(+). Its function is as follows. mRNA decapping enzyme that specifically removes the nicotinamide adenine dinucleotide (NAD) cap from a subset of mRNAs by hydrolyzing the diphosphate linkage to produce nicotinamide mononucleotide (NMN) and 5' monophosphate mRNA. The NAD-cap is present at the 5'-end of some RNAs; in contrast to the canonical N7 methylguanosine (m7G) cap, the NAD cap promotes mRNA decay. Mediates the hydrolysis of some nucleoside diphosphate derivatives. The chain is NAD-capped RNA hydrolase NPY1 from Saccharomyces cerevisiae (strain ATCC 204508 / S288c) (Baker's yeast).